We begin with the raw amino-acid sequence, 185 residues long: MTTTSTTSVDGRTSSTLKATLSASGPNSNGPTPAVLPQKPKLTGWAQAAAKALPRQQQQQQQARKDDSVAVQPANTKTKTIASTAPPANIKGSSTANGSSTNKKFKRANKQPYNREEVRSYMHKLFQSYTAGEKSHSMKTYKQVLSETASGRVSTATDWGTVSSSKNKNKKYGCLSDIAKVLRNQ.

2 stretches are compositionally biased toward low complexity: residues 1-24 (MTTT…LSAS) and 46-62 (AQAA…QQQQ). Disordered regions lie at residues 1–116 (MTTT…YNRE) and 147–168 (ETAS…SKNK). 3 stretches are compositionally biased toward polar residues: residues 73-83 (PANTKTKTIAS), 91-102 (KGSSTANGSSTN), and 147-166 (ETAS…SSSK).

Interacts with IGO1, LSM12 and PBP1.

The protein resides in the cytoplasm. The protein localises to the nucleus. This is Protein PBP4 (PBP4) from Saccharomyces cerevisiae (strain ATCC 204508 / S288c) (Baker's yeast).